We begin with the raw amino-acid sequence, 323 residues long: Aldo-keto reductase family 1 member C18 (323 aa).

Residues 20–24 and Asp50 contribute to the NADP(+) site; that span reads GFGTY. Tyr55 acts as the Proton donor in catalysis. Substrate is bound at residue His117. NADP(+) contacts are provided by residues 166 to 167, Gln190, 216 to 221, and 270 to 280; these read SN, YGALGT, and KSFNEERIREN.

It belongs to the aldo/keto reductase family. In terms of assembly, monomer. In terms of processing, the N-terminus is blocked. As to expression, corpus luteum (large luteal cells).

Its subcellular location is the cytoplasm. It catalyses the reaction (17R,20S)-17,20-dihydroxypregn-4-en-3-one + NADP(+) = 17alpha-hydroxyprogesterone + NADPH + H(+). The enzyme catalyses (17R,20S)-17,20-dihydroxypregn-4-en-3-one + NAD(+) = 17alpha-hydroxyprogesterone + NADH + H(+). Its function is as follows. Catalyzes the conversion of progesterone into 20-alpha-dihydroprogesterone (20 alpha-OHP). The polypeptide is Aldo-keto reductase family 1 member C18 (Akr1c18) (Rattus norvegicus (Rat)).